A 471-amino-acid chain; its full sequence is Tetratricopeptide repeat protein 29 (471 aa).

7 TPR repeats span residues 92 to 131, 136 to 173, 182 to 215, 234 to 267, 274 to 307, 314 to 347, and 354 to 387; these read DKLREAAQARSLFWLQRPLEDQPDKLDNFYHYLTKAEAAE, YEEVYNNLYALACYFDNSEDKWVRNHFYERCFKIAQLI, AEAEAHMGLLYEEEGELLKAAEHYEAFHELTQGR, VRTYRLLSDRMLQNRDYKQAIKILIKASEIAREG, GEASYYLGLAHLASGEYETALSVLDRYSEISTSL, GRAYEAMAKVLQSQGEMTEAIKYLEKFVVIARNN, and IQACTMLGDIYNEKGQYNKASDYFQQAFSTAMEV.

The protein localises to the cytoplasm. Its subcellular location is the cytoskeleton. It localises to the flagellum axoneme. Functionally, axonemal protein which is implicated in axonemal and/or peri-axonemal structure assembly and regulates flagellum assembly and beating and therefore sperm motility. The polypeptide is Tetratricopeptide repeat protein 29 (Ttc29) (Rattus norvegicus (Rat)).